The primary structure comprises 258 residues: Ubiquinone/menaquinone biosynthesis C-methyltransferase UbiE (258 aa).

Residues Thr81, Asp102, and 130–131 (NA) each bind S-adenosyl-L-methionine.

Belongs to the class I-like SAM-binding methyltransferase superfamily. MenG/UbiE family.

The catalysed reaction is a 2-demethylmenaquinol + S-adenosyl-L-methionine = a menaquinol + S-adenosyl-L-homocysteine + H(+). It catalyses the reaction a 2-methoxy-6-(all-trans-polyprenyl)benzene-1,4-diol + S-adenosyl-L-methionine = a 5-methoxy-2-methyl-3-(all-trans-polyprenyl)benzene-1,4-diol + S-adenosyl-L-homocysteine + H(+). It functions in the pathway quinol/quinone metabolism; menaquinone biosynthesis; menaquinol from 1,4-dihydroxy-2-naphthoate: step 2/2. It participates in cofactor biosynthesis; ubiquinone biosynthesis. In terms of biological role, methyltransferase required for the conversion of demethylmenaquinol (DMKH2) to menaquinol (MKH2) and the conversion of 2-polyprenyl-6-methoxy-1,4-benzoquinol (DDMQH2) to 2-polyprenyl-3-methyl-6-methoxy-1,4-benzoquinol (DMQH2). The protein is Ubiquinone/menaquinone biosynthesis C-methyltransferase UbiE of Sinorhizobium fredii (strain NBRC 101917 / NGR234).